A 552-amino-acid polypeptide reads, in one-letter code: Alpha-galactosidase (552 aa).

Substrate contacts are provided by residues W65, Y191, D220–D221, K325–D327, C368, and R383. D327 serves as the catalytic Nucleophile. The Proton donor/acceptor role is filled by D387.

This sequence belongs to the glycosyl hydrolase 36 family. Homodimer.

The enzyme catalyses Hydrolysis of terminal, non-reducing alpha-D-galactose residues in alpha-D-galactosides, including galactose oligosaccharides, galactomannans and galactolipids.. With respect to regulation, inhibited by hydrolysis product alpha-galactopyranose and to a lesser extent by beta-galactopyranose, its mutarotational product. Inhibited by synthetic cyclopropyl carbasugars. Its function is as follows. Hydrolyzes the short-chain alpha-galactosaccharides raffinose, melibiose and stachyose. In Thermotoga maritima (strain ATCC 43589 / DSM 3109 / JCM 10099 / NBRC 100826 / MSB8), this protein is Alpha-galactosidase.